Reading from the N-terminus, the 224-residue chain is Ribosome maturation factor RimP (224 aa).

The interval 194–224 is disordered; the sequence is REGRIPGDDLGSEEAGEQSDETASGEAEDKE. The span at 203 to 213 shows a compositional bias: acidic residues; the sequence is LGSEEAGEQSD.

The protein belongs to the RimP family.

Its subcellular location is the cytoplasm. Its function is as follows. Required for maturation of 30S ribosomal subunits. The protein is Ribosome maturation factor RimP of Brucella anthropi (strain ATCC 49188 / DSM 6882 / CCUG 24695 / JCM 21032 / LMG 3331 / NBRC 15819 / NCTC 12168 / Alc 37) (Ochrobactrum anthropi).